A 298-amino-acid chain; its full sequence is Probable 3-mercaptopyruvate sulfurtransferase (298 aa).

Residues 24–141 enclose the Rhodanese 1 domain; that stretch reads NAQKTVLLDA…WKTEGLELET (118 aa). The segment at 142–175 is hinge; the sequence is GEPRTPKPVVYEGAKLNKDLVASFDDIVKVIESP. The residue at position 164 (S164) is a Phosphoserine. Positions 176-292 constitute a Rhodanese 2 domain; that stretch reads DAAGVHIVDA…YGKRANEDSS (117 aa). R190 lines the substrate pocket. C252 acts as the Cysteine persulfide intermediate in catalysis.

Its subcellular location is the mitochondrion. It carries out the reaction 2-oxo-3-sulfanylpropanoate + [thioredoxin]-dithiol = [thioredoxin]-disulfide + hydrogen sulfide + pyruvate + H(+). Required for formation of the 2-thio group of the 5-methoxycarbonylmethyl-2-thiouridine modified base in some tRNAs. This chain is Probable 3-mercaptopyruvate sulfurtransferase (tum1), found in Schizosaccharomyces pombe (strain 972 / ATCC 24843) (Fission yeast).